We begin with the raw amino-acid sequence, 893 residues long: TBC domain-containing protein kinase-like protein (893 aa).

Positions 1 to 273 (MFPLKDAEMG…PDELMKDQVF (273 aa)) constitute a Protein kinase domain. The Rab-GAP TBC domain occupies 466–651 (DIPPLMRGLT…HLWDTLLLGN (186 aa)).

The protein belongs to the protein kinase superfamily. As to quaternary structure, component of the FERRY complex composed of five subunits, TBCK, PPP1R21, FERRY3, CRYZL1 and GATD1 with a ratio of 1:2:1:2:4, respectively.

The protein localises to the cytoplasm. Its subcellular location is the cytoskeleton. It is found in the spindle. It localises to the midbody. The protein resides in the early endosome. In terms of biological role, component of the FERRY complex (Five-subunit Endosomal Rab5 and RNA/ribosome intermediary). The FERRY complex directly interacts with mRNAs and RAB5A, and functions as a RAB5A effector involved in the localization and the distribution of specific mRNAs most likely by mediating their endosomal transport. The complex recruits mRNAs and ribosomes to early endosomes through direct mRNA-interaction. Also involved in the modulation of mTOR signaling and expression of mTOR complex components. Involved in the control of actin-cytoskeleton organization. The protein is TBC domain-containing protein kinase-like protein (Tbck) of Mus musculus (Mouse).